The following is a 94-amino-acid chain: Acylphosphatase (94 aa).

In terms of domain architecture, Acylphosphatase-like spans 8–94 (RFTARVVGRV…QGDLADFRRK (87 aa)). Catalysis depends on residues R23 and N41.

Belongs to the acylphosphatase family.

The enzyme catalyses an acyl phosphate + H2O = a carboxylate + phosphate + H(+). This is Acylphosphatase (acyP) from Frankia alni (strain DSM 45986 / CECT 9034 / ACN14a).